The following is a 185-amino-acid chain: Ribosome-recycling factor (185 aa).

Belongs to the RRF family.

It is found in the cytoplasm. Its function is as follows. Responsible for the release of ribosomes from messenger RNA at the termination of protein biosynthesis. May increase the efficiency of translation by recycling ribosomes from one round of translation to another. The polypeptide is Ribosome-recycling factor (Photobacterium profundum (strain SS9)).